A 485-amino-acid polypeptide reads, in one-letter code: Glutamyl-tRNA(Gln) amidotransferase subunit A (485 aa).

Active-site charge relay system residues include K76 and S152. The active-site Acyl-ester intermediate is the S176.

Belongs to the amidase family. GatA subfamily. Heterotrimer of A, B and C subunits.

It catalyses the reaction L-glutamyl-tRNA(Gln) + L-glutamine + ATP + H2O = L-glutaminyl-tRNA(Gln) + L-glutamate + ADP + phosphate + H(+). In terms of biological role, allows the formation of correctly charged Gln-tRNA(Gln) through the transamidation of misacylated Glu-tRNA(Gln) in organisms which lack glutaminyl-tRNA synthetase. The reaction takes place in the presence of glutamine and ATP through an activated gamma-phospho-Glu-tRNA(Gln). The protein is Glutamyl-tRNA(Gln) amidotransferase subunit A of Dechloromonas aromatica (strain RCB).